The sequence spans 221 residues: Triosephosphate isomerase (221 aa).

8 to 10 contacts substrate; it reads NLK. The active-site Electrophile is His-92. Catalysis depends on Glu-140, which acts as the Proton acceptor. Substrate contacts are provided by residues Ile-145, Gly-180, and 201 to 202; that span reads AS.

The protein belongs to the triosephosphate isomerase family. Homotetramer; dimer of dimers.

It localises to the cytoplasm. The catalysed reaction is D-glyceraldehyde 3-phosphate = dihydroxyacetone phosphate. Its pathway is carbohydrate biosynthesis; gluconeogenesis. The protein operates within carbohydrate degradation; glycolysis; D-glyceraldehyde 3-phosphate from glycerone phosphate: step 1/1. Functionally, involved in the gluconeogenesis. Catalyzes stereospecifically the conversion of dihydroxyacetone phosphate (DHAP) to D-glyceraldehyde-3-phosphate (G3P). This is Triosephosphate isomerase from Methanococcoides burtonii (strain DSM 6242 / NBRC 107633 / OCM 468 / ACE-M).